Reading from the N-terminus, the 349-residue chain is Mediator of RNA polymerase II transcription subunit 19 (349 aa).

Positions 1 to 28 are enriched in low complexity; sequence MSFHPQTPQSPSHFSPSSSDQSTSMSGS. Disordered stretches follow at residues 1–81 and 238–349; these read MSFH…EQKK and AHLN…VSGI. Residues 29 to 53 are compositionally biased toward polar residues; that stretch reads IVSTTTTLPTPAHSVNGSSLANDMS. Residues 70-81 show a composition bias toward basic and acidic residues; that stretch reads TSDDVGDREQKK. The span at 330–341 shows a compositional bias: low complexity; sequence QSYAQARQQSSY.

Belongs to the Mediator complex subunit 19 family. Component of the Mediator complex.

The protein resides in the nucleus. Functionally, component of the Mediator complex, a coactivator involved in the regulated transcription of nearly all RNA polymerase II-dependent genes. Mediator functions as a bridge to convey information from gene-specific regulatory proteins to the basal RNA polymerase II transcription machinery. Mediator is recruited to promoters by direct interactions with regulatory proteins and serves as a scaffold for the assembly of a functional preinitiation complex with RNA polymerase II and the general transcription factors. The protein is Mediator of RNA polymerase II transcription subunit 19 (rox3) of Neurospora crassa (strain ATCC 24698 / 74-OR23-1A / CBS 708.71 / DSM 1257 / FGSC 987).